A 300-amino-acid polypeptide reads, in one-letter code: Acetylglutamate kinase (300 aa).

Substrate-binding positions include G68–G69, R90, and N194.

Belongs to the acetylglutamate kinase family. ArgB subfamily.

The protein localises to the cytoplasm. It catalyses the reaction N-acetyl-L-glutamate + ATP = N-acetyl-L-glutamyl 5-phosphate + ADP. Its pathway is amino-acid biosynthesis; L-arginine biosynthesis; N(2)-acetyl-L-ornithine from L-glutamate: step 2/4. Its function is as follows. Catalyzes the ATP-dependent phosphorylation of N-acetyl-L-glutamate. This is Acetylglutamate kinase from Methanocaldococcus jannaschii (strain ATCC 43067 / DSM 2661 / JAL-1 / JCM 10045 / NBRC 100440) (Methanococcus jannaschii).